The sequence spans 86 residues: Putative membrane protein insertion efficiency factor (86 aa).

It belongs to the UPF0161 family.

It localises to the cell inner membrane. Functionally, could be involved in insertion of integral membrane proteins into the membrane. The polypeptide is Putative membrane protein insertion efficiency factor (Pseudomonas aeruginosa (strain UCBPP-PA14)).